A 524-amino-acid polypeptide reads, in one-letter code: Cytokinin dehydrogenase 7 (524 aa).

One can recognise an FAD-binding PCMH-type domain in the interval 58–238 (NCVKPLAVVR…TRARVLLQPA (181 aa)). Positions 91, 93, 94, and 95 each coordinate FAD. His96 is modified (pros-8alpha-FAD histidine). FAD is bound by residues Ser97, Gln101, Asp162, Thr167, Ser173, Val177, Ile228, Tyr479, Ser514, and Gln517.

It belongs to the oxygen-dependent FAD-linked oxidoreductase family. FAD serves as cofactor. As to expression, expressed in the vasculature of roots, hypocotyls, cotyledons and leaves of young seedlings. In flowers, expressed in the transmitting tissue of the gynoecium prior to pollination. Expressed in the mature embryo sac with maximum activity in the egg cell and the synergids.

The protein resides in the cytoplasm. The protein localises to the cytosol. The enzyme catalyses N(6)-dimethylallyladenine + A + H2O = 3-methyl-2-butenal + adenine + AH2. Functionally, catalyzes the oxidation of cytokinins, a family of N(6)-substituted adenine derivatives that are plant hormones, where the substituent is an isopentenyl group. Catalyzes in vitro the oxidation of various types of cytokinin nucleotides that are known as direct products of cytokinin biosynthesis. This is Cytokinin dehydrogenase 7 (CKX7) from Arabidopsis thaliana (Mouse-ear cress).